The following is a 147-amino-acid chain: Large ribosomal subunit protein uL15 (147 aa).

The segment at 1–62 is disordered; it reads MKLHELKPAQ…GQQPLSRRMP (62 aa). 2 stretches are compositionally biased toward gly residues: residues 21–31 and 42–52; these read RGIGSGTGKTS and AGGGVRPGFEG.

This sequence belongs to the universal ribosomal protein uL15 family. Part of the 50S ribosomal subunit.

Its function is as follows. Binds to the 23S rRNA. The chain is Large ribosomal subunit protein uL15 from Desulfitobacterium hafniense (strain DSM 10664 / DCB-2).